We begin with the raw amino-acid sequence, 1694 residues long: Immunoglobulin A1 protease autotransporter (1694 aa).

Positions 1–25 (MLNKKFKLNFIALTVAYALTPYTEA) are cleaved as a signal peptide. One can recognise a Peptidase S6 domain in the interval 26 to 332 (ALVRDDVDYQ…NIYKPEFAKT (307 aa)). The active site involves Ser-288. The tract at residues 991 to 1403 (VEKRNQTVDT…GSDRSTVALR (413 aa)) is disordered. Positions 997 to 1021 (TVDTTNITTPNNIQADVPSVPSNNE) are enriched in polar residues. A compositionally biased stretch (low complexity) spans 1037 to 1047 (TPSETTETVAE). Positions 1049-1061 (SKQESKTVEKNEQ) are enriched in basic and acidic residues. The span at 1082–1095 (KANTQTNEVAQSGS) shows a compositional bias: polar residues. 2 stretches are compositionally biased toward basic and acidic residues: residues 1104–1124 (EIKE…KDEI) and 1142–1154 (APKE…KVEE). Composition is skewed to polar residues over residues 1155–1178 (TQVQ…SPNS) and 1199–1210 (VSKNQTENTTDQ). Residues 1211–1226 (PTEREKTAKVETEKTQ) show a composition bias toward basic and acidic residues. Composition is skewed to polar residues over residues 1227 to 1247 (EPPQ…TVQP), 1255 to 1297 (NVPT…TAIT), and 1308 to 1336 (TETA…NSES). A compositionally biased stretch (low complexity) spans 1352–1370 (ETSAEETTAASTDETTIAD). Over residues 1374 to 1384 (RSKPNRRSRRS) the composition is skewed to basic residues. The 253-residue stretch at 1442–1694 (NNEGQYNVWV…TAELKLSFSF (253 aa)) folds into the Autotransporter domain.

It localises to the periplasm. It is found in the secreted. The protein resides in the cell surface. The protein localises to the cell outer membrane. The catalysed reaction is Cleavage of immunoglobulin A molecules at certain Pro-|-Xaa bonds in the hinge region. No small molecule substrates are known.. In terms of biological role, virulence factor; cleaves host immunoglobulin A producing intact Fc and Fab fragments. The sequence is that of Immunoglobulin A1 protease autotransporter (iga) from Haemophilus influenzae (strain ATCC 51907 / DSM 11121 / KW20 / Rd).